The sequence spans 201 residues: Recombination protein RecR (201 aa).

The C4-type zinc finger occupies 57 to 72 (CADCRTFTEQEVCNIC). In terms of domain architecture, Toprim spans 81 to 176 (GQICVVESPA…EASRIAHGVP (96 aa)).

The protein belongs to the RecR family.

In terms of biological role, may play a role in DNA repair. It seems to be involved in an RecBC-independent recombinational process of DNA repair. It may act with RecF and RecO. The sequence is that of Recombination protein RecR from Escherichia coli O6:K15:H31 (strain 536 / UPEC).